A 453-amino-acid chain; its full sequence is Verruculogen prenyltransferase (453 aa).

Glutamate 89 serves as a coordination point for substrate. Arginine 102, lysine 194, tyrosine 196, lysine 273, tyrosine 275, tyrosine 378, tyrosine 443, and tyrosine 447 together coordinate dimethylallyl diphosphate.

It belongs to the tryptophan dimethylallyltransferase family.

The enzyme catalyses verruculogen + dimethylallyl diphosphate = fumitremorgin A + diphosphate. It participates in mycotoxin biosynthesis. Functionally, verruculogen prenyltransferase; part of the gene cluster that mediates the biosynthesis of fumitremorgins, indole alkaloids that carry not only intriguing chemical structures, but also interesting biological and pharmacological activities. The biosynthesis of fumitremorgin-type alkaloids begins by condensation of the two amino acids L-tryptophan and L-proline to brevianamide F, catalyzed by the non-ribosomal peptide synthetase ftmPS/ftmA. Brevianamide F is then prenylated by the prenyltransferase ftmPT1/ftmB in the presence of dimethylallyl diphosphate, resulting in the formation of tryprostatin B. The three cytochrome P450 monooxygenases, ftmP450-1/ftmC, ftmP450-2/ftmE and ftmP450-3/FtmG, are responsible for the conversion of tryprostatin B to 6-hydroxytryprostatin B, tryprostatin A to fumitremorgin C and fumitremorgin C to 12,13-dihydroxyfumitremorgin C, respectively. The putative methyltransferase ftmMT/ftmD is expected for the conversion of 6-hydroxytryprostatin B to tryprostatin A. FtmPT2/FtmH catalyzes the prenylation of 12,13-dihydroxyfumitre-morgin C in the presence of dimethylallyl diphosphate, resulting in the formation of fumitremorgin B. Fumitremorgin B is further converted to verruculogen by ftmOx1/ftmF via the insertion of an endoperoxide bond between the two prenyl moieties. Finally, verruculogen is further converted to fumitremorgin A by the verruculogen prenyltransferase ftmPT3. The sequence is that of Verruculogen prenyltransferase from Neosartorya fischeri (strain ATCC 1020 / DSM 3700 / CBS 544.65 / FGSC A1164 / JCM 1740 / NRRL 181 / WB 181) (Aspergillus fischerianus).